The chain runs to 585 residues: MNIFADFDARIKKTLQDIDLKPKDGGELDLSRIGVEPPRDASHGDIATNAAMVLSKAVGQNPRELAARIAEALKADEDVESVDVAGPGFINLRLKASYWQRELLVMLNEGTDFGRSRLGAGKKVNVEYVSANPTGPMHVGHCRGAVVGDVLANLLKFAGYDVVKEYYINDAGAQIDVLARSVMLRYREALGESIGEIPAGLYPGDYLVRVGQELAGEFGTKLLEMPEAEALAIVKDRTIDAMMAMIRADLDALNVHHDVFYSERKLHVDHARAIRNAINDLTLKGHVYKGKLPPPKGQLPGDWEDCEQTLFRSTEVGDDIDRPLMKSDGSFTYFAGDVAYFKDKYDRGFNEMIYVLGADHGGYVKRLEAVARAVSDGKAKLTVLLCQLVKLFRNGEPARMSKRAGEFITLRDVVDEVGRDPVRFMMLYRKNDAPLDFDFAKVTEQSKDNPVFYVQYASARCHSVFRQAADQLGLVDLDRVAMGSHFEKLTDESEIALVRKLAEYPRLIESAAIHQEPHRLAFYLYDLASSFHSQWNRGTENPDLRFIKVNDPDLSLARLGLVQVVSDVLTSGLTIIGADAPTEMR.

The short motif at 131 to 141 is the 'HIGH' region element; the sequence is ANPTGPMHVGH.

This sequence belongs to the class-I aminoacyl-tRNA synthetase family. In terms of assembly, monomer.

The protein localises to the cytoplasm. It catalyses the reaction tRNA(Arg) + L-arginine + ATP = L-arginyl-tRNA(Arg) + AMP + diphosphate. The protein is Arginine--tRNA ligase of Brucella ovis (strain ATCC 25840 / 63/290 / NCTC 10512).